The sequence spans 256 residues: Probable sulfite/organosulfonate exporter TauE (256 aa).

A run of 8 helical transmembrane segments spans residues 5 to 25 (LLLP…FQTV), 33 to 53 (IVMG…AAVV), 76 to 96 (AVAA…LVLE), 103 to 123 (ATLL…SAAL), 142 to 162 (VFGG…IFQF), 172 to 190 (IRCA…RTLF), 199 to 219 (AAVC…TLLG), and 236 to 256 (FGVL…AWVL).

This sequence belongs to the 4-toluene sulfonate uptake permease (TSUP) (TC 2.A.102) family.

The protein localises to the cell inner membrane. In terms of biological role, could be a sulfite/organosulfonate exporter with a wide substrate range, including 3-sulfolactate and 3-sulfopyruvate. This chain is Probable sulfite/organosulfonate exporter TauE, found in Cupriavidus necator (strain ATCC 17699 / DSM 428 / KCTC 22496 / NCIMB 10442 / H16 / Stanier 337) (Ralstonia eutropha).